The following is a 161-amino-acid chain: Urease accessory protein UreE (161 aa).

Belongs to the UreE family. Homodimer.

It is found in the cytoplasm. Its function is as follows. Involved in urease metallocenter assembly. Binds nickel. Probably functions as a nickel donor during metallocenter assembly. It is not essential for urease activity. The sequence is that of Urease accessory protein UreE from Proteus mirabilis (strain HI4320).